Consider the following 330-residue polypeptide: Phenylalanine--tRNA ligase alpha subunit (330 aa).

Glu246 lines the Mg(2+) pocket.

This sequence belongs to the class-II aminoacyl-tRNA synthetase family. Phe-tRNA synthetase alpha subunit type 1 subfamily. Tetramer of two alpha and two beta subunits. It depends on Mg(2+) as a cofactor.

It is found in the cytoplasm. The enzyme catalyses tRNA(Phe) + L-phenylalanine + ATP = L-phenylalanyl-tRNA(Phe) + AMP + diphosphate + H(+). The sequence is that of Phenylalanine--tRNA ligase alpha subunit from Campylobacter jejuni subsp. doylei (strain ATCC BAA-1458 / RM4099 / 269.97).